We begin with the raw amino-acid sequence, 157 residues long: Probable calcium-binding protein CML15 (157 aa).

EF-hand domains lie at 3-38 (DQIRQLKDIFDRFDMDADGSLTILELAALLRSLGLK), 39-74 (PSGDQIHVLLASMDSNGNGFVEFDELVGTILPDLNE), 78-113 (INSEQLLEIFKSFDRDGNGFISAAELAGAMAKMGQP), and 114-149 (LTYKELTEMIKEADTNGDGVISFGEFASIMAKSAVD). Ca(2+) contacts are provided by Asp16, Asp18, Asp20, Ser22, Glu27, Asp52, Asn54, Asn56, Glu63, Asp91, Asp93, Asn95, Glu102, Asp127, Asn129, Asp131, and Glu138.

Potential calcium sensor. This Arabidopsis thaliana (Mouse-ear cress) protein is Probable calcium-binding protein CML15 (CML15).